The following is a 511-amino-acid chain: Apolipoprotein N-acyltransferase (511 aa).

Transmembrane regions (helical) follow at residues 7–25 (PGWPGHLLALAAGALTPLA), 58–78 (GWWYGFGAFGAGTSWIYVSIH), 90–110 (FLMLGFTAGVAFFFALPAWLW), 125–145 (LAFAALWLALELFRSWFLTGF), 163–183 (VPVGGVWLSSFVIALSAALLV), and 192–212 (GASLLLALVLLLGPWAAGLYL). Residues 230–470 (IQGNIAQELK…QGILRGEVIP (241 aa)) form the CN hydrolase domain. E269 serves as the catalytic Proton acceptor. Residue K330 is part of the active site. C382 acts as the Nucleophile in catalysis. The chain crosses the membrane as a helical span at residues 478 to 498 (LQYRVWPLAGLAGVLLLWALL).

The protein belongs to the CN hydrolase family. Apolipoprotein N-acyltransferase subfamily.

The protein localises to the cell inner membrane. It carries out the reaction N-terminal S-1,2-diacyl-sn-glyceryl-L-cysteinyl-[lipoprotein] + a glycerophospholipid = N-acyl-S-1,2-diacyl-sn-glyceryl-L-cysteinyl-[lipoprotein] + a 2-acyl-sn-glycero-3-phospholipid + H(+). The protein operates within protein modification; lipoprotein biosynthesis (N-acyl transfer). Catalyzes the phospholipid dependent N-acylation of the N-terminal cysteine of apolipoprotein, the last step in lipoprotein maturation. This is Apolipoprotein N-acyltransferase from Pseudomonas paraeruginosa (strain DSM 24068 / PA7) (Pseudomonas aeruginosa (strain PA7)).